The sequence spans 117 residues: Inner kinetochore subunit MHF1 (117 aa).

This sequence belongs to the TAF9 family. CENP-S/MHF1 subfamily. In terms of assembly, the MHF histone-fold complex is a heterotetramer of 2 MHF1-MHF2 heterodimers. Together with MPH1/FANCM, forms the FANCM-MHF complex. Component of the inner kinetochore constitutive centromere-associated network (CCAN).

DsDNA-binding component of a FANCM-MHF complex involved in DNA damage repair and genome maintenance. FANCM-MHF promotes gene conversion at blocked replication forks, probably by reversal of the stalled fork. Component of the kinetochore, a multiprotein complex that assembles on centromeric DNA and attaches chromosomes to spindle microtubules, mediating chromosome segregation and sister chromatid segregation during meiosis and mitosis. Component of the inner kinetochore constitutive centromere-associated network (CCAN), which serves as a structural platform for outer kinetochore assembly. This Candida albicans (strain SC5314 / ATCC MYA-2876) (Yeast) protein is Inner kinetochore subunit MHF1.